Reading from the N-terminus, the 355-residue chain is 3-isopropylmalate dehydrogenase (355 aa).

Arg90, Arg100, Arg128, and Asp222 together coordinate substrate. Asp222, Asp246, and Asp250 together coordinate Mg(2+). Residue 280–292 (GSAPDIAGKGIAN) participates in NAD(+) binding.

It belongs to the isocitrate and isopropylmalate dehydrogenases family. LeuB type 1 subfamily. In terms of assembly, homodimer. Mg(2+) is required as a cofactor. Requires Mn(2+) as cofactor.

It localises to the cytoplasm. It catalyses the reaction (2R,3S)-3-isopropylmalate + NAD(+) = 4-methyl-2-oxopentanoate + CO2 + NADH. It functions in the pathway amino-acid biosynthesis; L-leucine biosynthesis; L-leucine from 3-methyl-2-oxobutanoate: step 3/4. Catalyzes the oxidation of 3-carboxy-2-hydroxy-4-methylpentanoate (3-isopropylmalate) to 3-carboxy-4-methyl-2-oxopentanoate. The product decarboxylates to 4-methyl-2 oxopentanoate. This Burkholderia mallei (strain ATCC 23344) protein is 3-isopropylmalate dehydrogenase.